The following is a 567-amino-acid chain: Fanconi anemia group C protein homolog (567 aa).

Belongs to the multisubunit FA complex composed of FANCA, FANCB, FANCC, FANCE, FANCF, FANCG, FANCL/PHF9 and FANCM. This complex may also include HSP70. Interacts with ZBTB32. Upon IFNG induction, interacts with STAT1. Interacts with CDK1. Interacts with EIF2AK2.

The protein localises to the nucleus. It is found in the cytoplasm. DNA repair protein that may operate in a postreplication repair or a cell cycle checkpoint function. May be implicated in interstrand DNA cross-link repair and in the maintenance of normal chromosome stability. Upon IFNG induction, may facilitate STAT1 activation by recruiting STAT1 to IFNGR1. The sequence is that of Fanconi anemia group C protein homolog (FANCC) from Bos taurus (Bovine).